We begin with the raw amino-acid sequence, 62 residues long: Small ribosomal subunit protein eS27 (62 aa).

Zn(2+)-binding residues include C17, C20, C36, and C39. Residues 17–39 form a C4-type zinc finger; sequence CPDCENEQLVFEKATSVVECTVC.

Belongs to the eukaryotic ribosomal protein eS27 family. In terms of assembly, part of the 30S ribosomal subunit. Zn(2+) is required as a cofactor.

This Methanocorpusculum labreanum (strain ATCC 43576 / DSM 4855 / Z) protein is Small ribosomal subunit protein eS27.